The chain runs to 65 residues: Antimicrobial peptide 1 (65 aa).

An N-terminal signal peptide occupies residues 1-27 (MAKVSSAYLKFALVMILLLSVISAVMS). Disulfide bonds link Cys30–Cys47, Cys37–Cys51, and Cys46–Cys62.

Belongs to the AMP family. As to expression, seed specific.

Its subcellular location is the secreted. In terms of biological role, possesses antifungal activity. This Phytolacca americana (American pokeweed) protein is Antimicrobial peptide 1.